Here is a 148-residue protein sequence, read N- to C-terminus: Macrodomain Ter protein (148 aa).

Belongs to the MatP family. Homodimer.

It localises to the cytoplasm. Its function is as follows. Required for spatial organization of the terminus region of the chromosome (Ter macrodomain) during the cell cycle. Prevents early segregation of duplicated Ter macrodomains during cell division. Binds specifically to matS, which is a 13 bp signature motif repeated within the Ter macrodomain. In Photobacterium profundum (strain SS9), this protein is Macrodomain Ter protein.